The chain runs to 307 residues: Elongation factor Ts (307 aa).

The involved in Mg(2+) ion dislocation from EF-Tu stretch occupies residues 80 to 83 (TDFV).

This sequence belongs to the EF-Ts family.

The protein resides in the cytoplasm. In terms of biological role, associates with the EF-Tu.GDP complex and induces the exchange of GDP to GTP. It remains bound to the aminoacyl-tRNA.EF-Tu.GTP complex up to the GTP hydrolysis stage on the ribosome. This Rhodospirillum centenum (strain ATCC 51521 / SW) protein is Elongation factor Ts.